The chain runs to 162 residues: Universal stress protein MJ0577 (162 aa).

ATP-binding positions include Pro11, Val41, 127–133 (GSHGKTN), and 141–143 (SVT).

Belongs to the universal stress protein A family. As to quaternary structure, homodimer. Requires Mn(2+) as cofactor.

The protein localises to the cytoplasm. This Methanocaldococcus jannaschii (strain ATCC 43067 / DSM 2661 / JAL-1 / JCM 10045 / NBRC 100440) (Methanococcus jannaschii) protein is Universal stress protein MJ0577.